Reading from the N-terminus, the 117-residue chain is Cell division protein FtsB (117 aa).

The Cytoplasmic segment spans residues Met1 to Trp6. Residues Met7–Phe24 form a helical membrane-spanning segment. Residues Gly25 to Pro117 are Periplasmic-facing. Positions Ser29–Ala69 form a coiled coil.

The protein belongs to the FtsB family. In terms of assembly, part of a complex composed of FtsB, FtsL and FtsQ.

The protein resides in the cell inner membrane. Its function is as follows. Essential cell division protein. May link together the upstream cell division proteins, which are predominantly cytoplasmic, with the downstream cell division proteins, which are predominantly periplasmic. This chain is Cell division protein FtsB, found in Stenotrophomonas maltophilia (strain R551-3).